A 70-amino-acid chain; its full sequence is Conotoxin Ep11.12 (70 aa).

Residues 1-26 (MMFRVTSVGCFLLVILSLNLVVLTNA) form the signal peptide. 4 disulfides stabilise this stretch: Cys-27–Cys-41, Cys-34–Cys-46, Cys-40–Cys-50, and Cys-45–Cys-54. Pro-57 is subject to Proline amide. Positions 61–70 (AKLREFFRQR) are excised as a propeptide.

This sequence belongs to the conotoxin I2 superfamily. As to expression, expressed by the venom duct.

The protein localises to the secreted. This is Conotoxin Ep11.12 from Conus episcopatus (Bishop's cone).